The sequence spans 335 residues: Probable pectinesterase 29 (335 aa).

The signal sequence occupies residues 1-24 (MGTHRIFIGLIALCCFCLPHLIEA). The N-linked (GlcNAc...) asparagine glycan is linked to Asn-43. Asp-166 acts as the Proton donor in catalysis. Catalysis depends on Asp-187, which acts as the Nucleophile. Substrate-binding residues include Arg-248 and Trp-250. An N-linked (GlcNAc...) asparagine glycan is attached at Asn-262.

The protein belongs to the pectinesterase family. As to expression, expressed in flower buds.

The protein localises to the secreted. Its subcellular location is the cell wall. The enzyme catalyses [(1-&gt;4)-alpha-D-galacturonosyl methyl ester](n) + n H2O = [(1-&gt;4)-alpha-D-galacturonosyl](n) + n methanol + n H(+). The protein operates within glycan metabolism; pectin degradation; 2-dehydro-3-deoxy-D-gluconate from pectin: step 1/5. Functionally, acts in the modification of cell walls via demethylesterification of cell wall pectin. This is Probable pectinesterase 29 (PME29) from Arabidopsis thaliana (Mouse-ear cress).